A 469-amino-acid chain; its full sequence is MNPNQKIITIGSVSLTIATVCFLMQIAILVTTVTLHFRQYECDSPANNQVMPCEPTIIERNITEIVYLNNTTIEKEICPKLVEYRNWSKPQCKITGFAPFSKDNSIRLSAGGDIWVTREPYVSCDPGKCYQFALGQGTTLDNKHSNDTIHDRIPHRTLLMNELGVPFHLGTRQVCIAWSSSSCHDGKAWLHVCVTGDDKNATASFIYDGRLVDSIGSWSQNILRTQESECVCINGTCTVVMTDGSASGRADTRILFIEEGKIVHISPLSGSAQHVEECSCYPRYPGVRCICRDNWKGSNRPVVDINVEDYSIDSSYVCSGLVGDTPRNNDRSSNSNCRNPNNERGNHGVKGWAFDDGNDVWMGRTISKDLRSGYETFKVIGGWSTPNSKSQINRQVIVDSDNRSGYSGIFSVEGKSCINRCFYVELIRGREQETRVWWTSNSIVVFCGTSGTYGTGSWPDGADINLMPI.

The Intravirion segment spans residues 1-9 (MNPNQKIIT). A helical transmembrane segment spans residues 10-30 (IGSVSLTIATVCFLMQIAILV). The segment at 11–33 (GSVSLTIATVCFLMQIAILVTTV) is involved in apical transport and lipid raft association. Topologically, residues 31–469 (TTVTLHFRQY…DGADINLMPI (439 aa)) are virion surface. The segment at 36–88 (HFRQYECDSPANNQVMPCEPTIIERNITEIVYLNNTTIEKEICPKLVEYRNWS) is hypervariable stalk region. Asparagine 61, asparagine 69, asparagine 70, and asparagine 86 each carry an N-linked (GlcNAc...) asparagine; by host glycan. Residues 91 to 469 (QCKITGFAPF…DGADINLMPI (379 aa)) are head of neuraminidase. Cystine bridges form between cysteine 92-cysteine 417, cysteine 124-cysteine 129, cysteine 183-cysteine 230, cysteine 232-cysteine 237, cysteine 278-cysteine 291, cysteine 280-cysteine 289, cysteine 318-cysteine 337, and cysteine 421-cysteine 447. Arginine 118 is a binding site for substrate. Asparagine 146 carries N-linked (GlcNAc...) asparagine; by host glycosylation. Aspartate 151 acts as the Proton donor/acceptor in catalysis. Residue arginine 152 coordinates substrate. Asparagine 200 and asparagine 234 each carry an N-linked (GlcNAc...) asparagine; by host glycan. 276 to 277 (EE) contributes to the substrate binding site. A substrate-binding site is contributed by arginine 292. 3 residues coordinate Ca(2+): aspartate 293, glycine 297, and aspartate 324. Residues 323-350 (GDTPRNNDRSSNSNCRNPNNERGNHGVK) are disordered. The span at 331–343 (RSSNSNCRNPNNE) shows a compositional bias: low complexity. Arginine 371 serves as a coordination point for substrate. N-linked (GlcNAc...) asparagine; by host glycosylation occurs at asparagine 402. Tyrosine 406 serves as the catalytic Nucleophile.

This sequence belongs to the glycosyl hydrolase 34 family. In terms of assembly, homotetramer. Ca(2+) serves as cofactor. In terms of processing, N-glycosylated.

The protein resides in the virion membrane. The protein localises to the host apical cell membrane. It catalyses the reaction Hydrolysis of alpha-(2-&gt;3)-, alpha-(2-&gt;6)-, alpha-(2-&gt;8)- glycosidic linkages of terminal sialic acid residues in oligosaccharides, glycoproteins, glycolipids, colominic acid and synthetic substrates.. With respect to regulation, inhibited by the neuraminidase inhibitors zanamivir (Relenza) and oseltamivir (Tamiflu). These drugs interfere with the release of progeny virus from infected cells and are effective against all influenza strains. Resistance to neuraminidase inhibitors is quite rare. In terms of biological role, catalyzes the removal of terminal sialic acid residues from viral and cellular glycoconjugates. Cleaves off the terminal sialic acids on the glycosylated HA during virus budding to facilitate virus release. Additionally helps virus spread through the circulation by further removing sialic acids from the cell surface. These cleavages prevent self-aggregation and ensure the efficient spread of the progeny virus from cell to cell. Otherwise, infection would be limited to one round of replication. Described as a receptor-destroying enzyme because it cleaves a terminal sialic acid from the cellular receptors. May facilitate viral invasion of the upper airways by cleaving the sialic acid moieties on the mucin of the airway epithelial cells. Likely to plays a role in the budding process through its association with lipid rafts during intracellular transport. May additionally display a raft-association independent effect on budding. Plays a role in the determination of host range restriction on replication and virulence. Sialidase activity in late endosome/lysosome traffic seems to enhance virus replication. This is Neuraminidase from Aves (Human).